Reading from the N-terminus, the 330-residue chain is ADP-L-glycero-D-manno-heptose-6-epimerase (330 aa).

NADP(+) is bound by residues 11 to 12 (FI), 32 to 33 (DN), K39, K54, 75 to 79 (EGACS), and N92. The active-site Proton acceptor is Y139. An NADP(+)-binding site is contributed by K143. Substrate is bound at residue N168. NADP(+)-binding residues include V169 and K177. K177 functions as the Proton acceptor in the catalytic mechanism. Residues R179, H186, 200-203 (FGEY), R213, and Y292 each bind substrate.

This sequence belongs to the NAD(P)-dependent epimerase/dehydratase family. HldD subfamily. As to quaternary structure, homopentamer. It depends on NADP(+) as a cofactor.

The catalysed reaction is ADP-D-glycero-beta-D-manno-heptose = ADP-L-glycero-beta-D-manno-heptose. It participates in nucleotide-sugar biosynthesis; ADP-L-glycero-beta-D-manno-heptose biosynthesis; ADP-L-glycero-beta-D-manno-heptose from D-glycero-beta-D-manno-heptose 7-phosphate: step 4/4. Functionally, catalyzes the interconversion between ADP-D-glycero-beta-D-manno-heptose and ADP-L-glycero-beta-D-manno-heptose via an epimerization at carbon 6 of the heptose. This is ADP-L-glycero-D-manno-heptose-6-epimerase from Paraburkholderia phytofirmans (strain DSM 17436 / LMG 22146 / PsJN) (Burkholderia phytofirmans).